The sequence spans 647 residues: Beta-galactosidase (647 aa).

Residues 1–24 (MLRVPLCTPLPLLALLQLLGAAHG) form the signal peptide. Positions 25–29 (IYNVT) are excised as a propeptide. The N-linked (GlcNAc...) asparagine glycan is linked to Asn-27. The substrate site is built by Tyr-84, Glu-130, and Asn-188. The Proton donor role is filled by Glu-189. Cys-196 and Cys-231 are oxidised to a cystine. A glycan (N-linked (GlcNAc...) asparagine) is linked at Asn-248. Catalysis depends on Glu-269, which acts as the Nucleophile. Tyr-334 is a substrate binding site. N-linked (GlcNAc...) asparagine glycosylation is found at Asn-500, Asn-504, Asn-510, Asn-544, Asn-557, and Asn-617. A disulfide bridge links Cys-628 with Cys-636.

It belongs to the glycosyl hydrolase 35 family. Homodimer. May form higher multimers.

It is found in the lysosome. The enzyme catalyses Hydrolysis of terminal non-reducing beta-D-galactose residues in beta-D-galactosides.. In terms of biological role, cleaves beta-linked terminal galactosyl residues from gangliosides, glycoproteins, and glycosaminoglycans. The polypeptide is Beta-galactosidase (Glb1) (Mus musculus (Mouse)).